The following is a 207-amino-acid chain: Octanoyltransferase (207 aa).

Residues 27–203 (ADTEDELWVV…HLETQFTPKA (177 aa)) enclose the BPL/LPL catalytic domain. Substrate-binding positions include 66 to 73 (RGGQITYH), 133 to 135 (SLG), and 146 to 148 (GLA). Catalysis depends on Cys-164, which acts as the Acyl-thioester intermediate.

It belongs to the LipB family.

Its subcellular location is the cytoplasm. The catalysed reaction is octanoyl-[ACP] + L-lysyl-[protein] = N(6)-octanoyl-L-lysyl-[protein] + holo-[ACP] + H(+). The protein operates within protein modification; protein lipoylation via endogenous pathway; protein N(6)-(lipoyl)lysine from octanoyl-[acyl-carrier-protein]: step 1/2. In terms of biological role, catalyzes the transfer of endogenously produced octanoic acid from octanoyl-acyl-carrier-protein onto the lipoyl domains of lipoate-dependent enzymes. Lipoyl-ACP can also act as a substrate although octanoyl-ACP is likely to be the physiological substrate. The sequence is that of Octanoyltransferase from Neisseria meningitidis serogroup A / serotype 4A (strain DSM 15465 / Z2491).